Here is a 97-residue protein sequence, read N- to C-terminus: Acylphosphatase (97 aa).

In terms of domain architecture, Acylphosphatase-like spans 9 to 95; it reads TRHLRIHGLV…CDAQGFEQRE (87 aa). Active-site residues include Arg24 and Asn42.

It belongs to the acylphosphatase family.

The catalysed reaction is an acyl phosphate + H2O = a carboxylate + phosphate + H(+). The chain is Acylphosphatase (acyP) from Acidovorax sp. (strain JS42).